The chain runs to 84 residues: Putative membrane protein insertion efficiency factor (84 aa).

This sequence belongs to the UPF0161 family.

The protein resides in the cell inner membrane. Could be involved in insertion of integral membrane proteins into the membrane. This is Putative membrane protein insertion efficiency factor from Shewanella halifaxensis (strain HAW-EB4).